A 129-amino-acid chain; its full sequence is SPbeta prophage-derived protein NrdI (129 aa).

This sequence belongs to the NrdI family.

Its function is as follows. Probably involved in ribonucleotide reductase function. This Bacillus subtilis (strain 168) protein is SPbeta prophage-derived protein NrdI (nrdIB).